Consider the following 597-residue polypeptide: MHRTHLAGELRSHHVGQTVTLSGWVARRRDHGGVIFIDLRDRSGLAQVVFRDSDVAAQAHHLRSEYCIRVTGVVDARPEGSENPNLDSGAIELNVNELTILNSSEALPFQIDDQSSSGEVGEETRLKYRYLDLRRKTQHDALVLRSNVNQAARSVLLKHDFHEIETPTLTRSTPEGARDFLVPARLRPGSFYALPQSPQLFKQLLMVGGMERYFQIARCYRDEDFRADRQPEFTQLDVEMSFVDQDDVISVAEEILTAIWKEIGYDIPTPIPRMTYADAMKYYGSDKPDLRFDIKIVECTEFFANTTFRVFQNPYVGAIVMEDGASQPRRQLDAWQDWAKQRGAKGLAYILVGDDGQLSGPVAKNITDAEREGIADHVGAKPGDCIFFAAGDAKSSRALLGAARGEVARKLGLIKEGDWAFTWVVDAPLFEPAADATAEGDVALGHSAWTAVHHAFTSPKPECMDSFDKDPGSALSYAYDIVCNGNEIGGGSIRIHRSDVQQRVFNVMGISDEEAQEKFGFLLEAMKFGAPPHGGIAFGWDRIVSLLGGFESIRDVIAFPKSGGGVDPLTDAPAPITPEQRKESGIDAKPKKKETKN.

An L-aspartate-binding site is contributed by glutamate 175. Residues glutamine 199 to lysine 202 are aspartate. Position 221 (arginine 221) interacts with L-aspartate. ATP-binding positions include arginine 221 to glutamate 223 and glutamine 230. Histidine 453 provides a ligand contact to L-aspartate. Glutamate 487 is an ATP binding site. Arginine 494 provides a ligand contact to L-aspartate. Glycine 539–arginine 542 contributes to the ATP binding site. Positions serine 562–asparagine 597 are disordered. The span at glutamate 579–lysine 589 shows a compositional bias: basic and acidic residues.

Belongs to the class-II aminoacyl-tRNA synthetase family. Type 1 subfamily. As to quaternary structure, homodimer.

The protein localises to the cytoplasm. The enzyme catalyses tRNA(Asx) + L-aspartate + ATP = L-aspartyl-tRNA(Asx) + AMP + diphosphate. Its function is as follows. Aspartyl-tRNA synthetase with relaxed tRNA specificity since it is able to aspartylate not only its cognate tRNA(Asp) but also tRNA(Asn). Reaction proceeds in two steps: L-aspartate is first activated by ATP to form Asp-AMP and then transferred to the acceptor end of tRNA(Asp/Asn). The sequence is that of Aspartate--tRNA(Asp/Asn) ligase from Corynebacterium kroppenstedtii (strain DSM 44385 / JCM 11950 / CIP 105744 / CCUG 35717).